The sequence spans 349 residues: tRNA pseudouridine synthase D (349 aa).

Substrate is bound at residue F27. D80 serves as the catalytic Nucleophile. Position 129 (N129) interacts with substrate. Positions 155–303 (GVPNYFGAQR…VEAARRAMLL (149 aa)) constitute a TRUD domain. Residue F329 participates in substrate binding.

Belongs to the pseudouridine synthase TruD family.

The enzyme catalyses uridine(13) in tRNA = pseudouridine(13) in tRNA. Its function is as follows. Responsible for synthesis of pseudouridine from uracil-13 in transfer RNAs. In Escherichia coli O6:H1 (strain CFT073 / ATCC 700928 / UPEC), this protein is tRNA pseudouridine synthase D.